The following is a 163-amino-acid chain: Type-2 ice-structuring protein (163 aa).

The signal sequence occupies residues 1 to 17 (MLTVSLLVCAMMALTQA). Residues 18 to 34 (NDDKILKGTATEAGPVS) constitute a propeptide that is removed on maturation. The C-type lectin domain maps to 39–163 (PNCPAGWQPL…SHKSVCAMTF (125 aa)). 5 disulfide bridges follow: cysteine 41–cysteine 52, cysteine 69–cysteine 159, cysteine 103–cysteine 134, cysteine 123–cysteine 145, and cysteine 135–cysteine 151.

In terms of processing, the N-terminus is blocked.

The protein localises to the secreted. Antifreeze proteins lower the blood freezing point. The polypeptide is Type-2 ice-structuring protein (Hemitripterus americanus (Sea raven)).